The sequence spans 301 residues: Acetylglutamate kinase (301 aa).

Substrate contacts are provided by residues 68–69 (GG), Arg-90, and Asn-195.

The protein belongs to the acetylglutamate kinase family. ArgB subfamily.

The protein localises to the cytoplasm. It carries out the reaction N-acetyl-L-glutamate + ATP = N-acetyl-L-glutamyl 5-phosphate + ADP. It functions in the pathway amino-acid biosynthesis; L-arginine biosynthesis; N(2)-acetyl-L-ornithine from L-glutamate: step 2/4. Functionally, catalyzes the ATP-dependent phosphorylation of N-acetyl-L-glutamate. The polypeptide is Acetylglutamate kinase (Pseudomonas fluorescens (strain SBW25)).